The chain runs to 242 residues: UPF0246 protein SPD_1378 (242 aa).

The protein belongs to the UPF0246 family.

This chain is UPF0246 protein SPD_1378, found in Streptococcus pneumoniae serotype 2 (strain D39 / NCTC 7466).